The primary structure comprises 746 residues: Chitin biosynthesis protein CHS6 (746 aa).

Residues 1–25 (MNLFWPSETKKQNEIPGGDYTPGNS) form a disordered region. Residues 734–746 (LAWIADLDHTVQP) are CHS5-binding.

It belongs to the CHAPS family. Component of the CHS5/6 complex composed of the 4 CHAPS proteins BCH1, BCH2, BUD7, and CHS6 as well as at least CHS5 and GTP-bound ARF1. The complex interacts with the cargo protein CHS3.

The protein resides in the golgi apparatus. It is found in the trans-Golgi network membrane. In terms of biological role, member of the CHS5-ARF1P-binding proteins (CHAPS) which mediates export of specific cargo proteins, including chitin synthase CHS3. The sequence is that of Chitin biosynthesis protein CHS6 (CHS6) from Saccharomyces cerevisiae (strain ATCC 204508 / S288c) (Baker's yeast).